The primary structure comprises 389 residues: Sulfate adenylyltransferase (389 aa).

Belongs to the sulfate adenylyltransferase family.

It carries out the reaction sulfate + ATP + H(+) = adenosine 5'-phosphosulfate + diphosphate. The protein operates within sulfur metabolism; hydrogen sulfide biosynthesis; sulfite from sulfate: step 1/3. The polypeptide is Sulfate adenylyltransferase (Microcystis aeruginosa (strain NIES-843 / IAM M-2473)).